Consider the following 166-residue polypeptide: 2-C-methyl-D-erythritol 2,4-cyclodiphosphate synthase (166 aa).

Positions 15 and 17 each coordinate a divalent metal cation. 4-CDP-2-C-methyl-D-erythritol 2-phosphate contacts are provided by residues 15-17 (DIH) and 43-44 (HS). H51 is a binding site for a divalent metal cation. 4-CDP-2-C-methyl-D-erythritol 2-phosphate contacts are provided by residues 65–67 (DIG), 141–144 (TTNE), and R151.

This sequence belongs to the IspF family. Homotrimer. The cofactor is a divalent metal cation.

It carries out the reaction 4-CDP-2-C-methyl-D-erythritol 2-phosphate = 2-C-methyl-D-erythritol 2,4-cyclic diphosphate + CMP. Its pathway is isoprenoid biosynthesis; isopentenyl diphosphate biosynthesis via DXP pathway; isopentenyl diphosphate from 1-deoxy-D-xylulose 5-phosphate: step 4/6. Functionally, involved in the biosynthesis of isopentenyl diphosphate (IPP) and dimethylallyl diphosphate (DMAPP), two major building blocks of isoprenoid compounds. Catalyzes the conversion of 4-diphosphocytidyl-2-C-methyl-D-erythritol 2-phosphate (CDP-ME2P) to 2-C-methyl-D-erythritol 2,4-cyclodiphosphate (ME-CPP) with a corresponding release of cytidine 5-monophosphate (CMP). The sequence is that of 2-C-methyl-D-erythritol 2,4-cyclodiphosphate synthase from Prochlorococcus marinus (strain MIT 9215).